Here is a 296-residue protein sequence, read N- to C-terminus: Putative F-box protein At1g67623 (296 aa).

The region spanning S21–L70 is the F-box domain.

This chain is Putative F-box protein At1g67623, found in Arabidopsis thaliana (Mouse-ear cress).